The primary structure comprises 133 residues: Protein FwdD (133 aa).

This is Protein FwdD (fwdD) from Methanocaldococcus jannaschii (strain ATCC 43067 / DSM 2661 / JAL-1 / JCM 10045 / NBRC 100440) (Methanococcus jannaschii).